We begin with the raw amino-acid sequence, 516 residues long: MSKTESRKLSDDYEVVDVLGRGGFSIVRRGVSKSEEKTQVAIKTLRRLGPAMAGMKQGTKPVPGSGLPMWKQVSISDALLTNEILVMRRIVESVAPHPNVINLHDVYEDVHGVHLVLELCSGGELFDRIVGRDRYSEFDAACVIRQIASGLEALHKASIVHRDLKPENCLFSDKDEKSTLKIMDFGLSSVEDFSDPIVALFGSIDYVSPEALSRQEVSAASDMWSVGVILYILLSGCPPFHAATNREKQQRILQGEFSFQDHTWKTISSSAKDLISRLLSVQPYKRPTASDLLRHPWVIGDCAKQDLMDAEVVSKLQKFNARRKLRAAAIASVLSCKVALRTKRLRNLLGTHDLTSEELDNLRLHFGRICADGENATLSEFEQVLRAMKMDSLIPLAPRVFDLFDNNRDGTVDMREILCGFSSLRNSRGDDALRLCFQMYDADRSGCISKEELASMLRALPEECLPGDITEPGKLDEVFDQMDADSDGKVTFDEFKAAMNKDSALQDVLLSSLRPQ.

The Protein kinase domain occupies 13–298; sequence YEVVDVLGRG…ASDLLRHPWV (286 aa). ATP contacts are provided by residues 19 to 27 and Lys-43; that span reads LGRGGFSIV. Asp-163 (proton acceptor) is an active-site residue. The residue at position 263 (Thr-263) is a Phosphothreonine. Positions 321 to 334 are calmodulin-binding; that stretch reads ARRKLRAAAIASVL. Residues 343-363 adopt a coiled-coil conformation; that stretch reads KRLRNLLGTHDLTSEELDNLR. 3 consecutive EF-hand domains span residues 392 to 427, 428 to 463, and 470 to 505; these read SLIP…LRNS, RGDD…LPEE, and TEPG…DSAL. Asp-405, Asn-407, Asp-409, Thr-411, Glu-416, Asp-441, Asp-443, Ser-445, Cys-447, Glu-452, Asp-483, Asp-485, Asp-487, Lys-489, and Glu-494 together coordinate Ca(2+).

It belongs to the protein kinase superfamily. CAMK Ser/Thr protein kinase family. CaMK subfamily. In terms of processing, autophosphorylation. Mainly expressed in roots and panicles. Detected in leaves, shoots and culms.

The protein localises to the nucleus. It is found in the cytoplasm. It localises to the cell membrane. It catalyses the reaction L-seryl-[protein] + ATP = O-phospho-L-seryl-[protein] + ADP + H(+). The catalysed reaction is L-threonyl-[protein] + ATP = O-phospho-L-threonyl-[protein] + ADP + H(+). Functionally, calcium- and calmodulin-dependent protein kinase required for arbuscular mycorrhizal (AM) symbiosis. Involved in response to water deprivation stress. Required for abscisic acid-induced antioxidant defense and oxidative stress tolerance during dehydration stress. Functions upstream of MPK1 in an abscisic acid signaling pathway that regulates the activities of antioxidant enzymes and the production of hydrogen peroxide. This is Calcium and calcium/calmodulin-dependent serine/threonine-protein kinase (CCAMK) from Oryza sativa subsp. japonica (Rice).